A 217-amino-acid chain; its full sequence is uncharacterized protein (217 aa).

The ABC transporter domain occupies Leu-2–Leu-216. Gly-34–Ser-41 contacts ATP.

Belongs to the ABC transporter superfamily.

In terms of biological role, probably part of a binding-protein-dependent transport system YnjCD. Probably responsible for energy coupling to the transport system. This is an uncharacterized protein from Escherichia coli (strain K12).